Here is a 247-residue protein sequence, read N- to C-terminus: Segregation and condensation protein A (247 aa).

It belongs to the ScpA family. In terms of assembly, component of a cohesin-like complex composed of ScpA, ScpB and the Smc homodimer, in which ScpA and ScpB bind to the head domain of Smc. The presence of the three proteins is required for the association of the complex with DNA.

It is found in the cytoplasm. Participates in chromosomal partition during cell division. May act via the formation of a condensin-like complex containing Smc and ScpB that pull DNA away from mid-cell into both cell halves. The chain is Segregation and condensation protein A from Bacillus cereus (strain ATCC 10987 / NRS 248).